A 249-amino-acid chain; its full sequence is Glucosamine-6-phosphate deaminase 2 (249 aa).

Aspartate 67 functions as the Proton acceptor; for enolization step in the catalytic mechanism. Asparagine 136 (for ring-opening step) is an active-site residue. Residue histidine 138 is the Proton acceptor; for ring-opening step of the active site. Glutamate 143 functions as the For ring-opening step in the catalytic mechanism.

It belongs to the glucosamine/galactosamine-6-phosphate isomerase family. NagB subfamily.

It carries out the reaction alpha-D-glucosamine 6-phosphate + H2O = beta-D-fructose 6-phosphate + NH4(+). It functions in the pathway amino-sugar metabolism; N-acetylneuraminate degradation; D-fructose 6-phosphate from N-acetylneuraminate: step 5/5. Its function is as follows. Catalyzes the reversible isomerization-deamination of glucosamine 6-phosphate (GlcN6P) to form fructose 6-phosphate (Fru6P) and ammonium ion. Required for growth on glucosamine and also provides the majority of GlcN6P deaminase activity during growth on N-acetylglucosamine (GlcNAc). This Bacillus subtilis (strain 168) protein is Glucosamine-6-phosphate deaminase 2.